Reading from the N-terminus, the 363-residue chain is MERVYNFSAGPAVLPVPVLEKVQRELLSYNGSGMSVMELSHRSELFQNILDDAESLIRELMEIPDNYKVLFLQGGASLQFDMVPMNLANGKKAAYVNTGSWAKKAISEAKKIQGVEVEVIASSEDRNFSYIPEIPTVSSDVAYLHVTTNNTIEGTAMFDVPDSAVPVVADMSSNILSSVYDVKKFGLIYAGAQKNIGPAGLTLVIVREDLIGQVEGLPSMLDFKVQAENDSMYNTPPTFAIYVAKLVFEWIKEQGGVAGIEALNRKKAALLYDYIDQSDFFSSPVEPSARSLTNVPFVTNSAEFDKAFVKEAEANGFENLKGHRSVGGMRASLYNAFPIEGVEALIAFMEKFANARKGGEVRV.

L-glutamate is bound at residue arginine 42. Pyridoxal 5'-phosphate is bound by residues 76-77 (AS), tryptophan 101, threonine 151, aspartate 170, and glutamine 193. Position 194 is an N6-(pyridoxal phosphate)lysine (lysine 194). A pyridoxal 5'-phosphate-binding site is contributed by 234–235 (NT).

This sequence belongs to the class-V pyridoxal-phosphate-dependent aminotransferase family. SerC subfamily. Homodimer. The cofactor is pyridoxal 5'-phosphate.

The protein localises to the cytoplasm. It carries out the reaction O-phospho-L-serine + 2-oxoglutarate = 3-phosphooxypyruvate + L-glutamate. The catalysed reaction is 4-(phosphooxy)-L-threonine + 2-oxoglutarate = (R)-3-hydroxy-2-oxo-4-phosphooxybutanoate + L-glutamate. Its pathway is amino-acid biosynthesis; L-serine biosynthesis; L-serine from 3-phospho-D-glycerate: step 2/3. Functionally, catalyzes the reversible conversion of 3-phosphohydroxypyruvate to phosphoserine and of 3-hydroxy-2-oxo-4-phosphonooxybutanoate to phosphohydroxythreonine. The sequence is that of Phosphoserine aminotransferase from Listeria monocytogenes serovar 1/2a (strain ATCC BAA-679 / EGD-e).